The sequence spans 509 residues: DAP3-binding cell death enhancer 1 (509 aa).

A mitochondrion-targeting transit peptide spans 1–23 (MWRLTGILGRALPRLLGPGFRGI). 2 disordered regions span residues 19–60 (GFRG…RNRD) and 143–185 (VLPS…PGLL). A propeptide spans 24-101 (TPKPTSSDGP…AVLALHLARQ (78 aa)) (extended MTS). Residues 26 to 40 (KPTSSDGPQTTSTTL) show a composition bias toward polar residues. Basic and acidic residues-rich tracts occupy residues 46-60 (NFDR…RNRD) and 156-168 (GLRE…EEPA). TPR repeat units follow at residues 213 to 245 (AGPP…QLSV), 246 to 278 (AIAF…RGYS), 279 to 313 (KAQY…VQGH), 314 to 351 (SLAQ…DSGL), 352 to 385 (TEAQ…SNGD), 386 to 423 (SQSR…GNEP), and 470 to 498 (ASST…AMPS). The SIFI-degron signature appears at 307–326 (LAAVQGHSLAQYRYARCLLQ).

The protein belongs to the DELE1 family. As to quaternary structure, interacts with DAP3. In terms of assembly, interacts (via TPR repeats) with EIF2AK1/HRI; activating the protein kinase activity of EIF2AK1/HRI, thereby promoting the integrated stress response (ISR). Homooctamer; oligomerization is required to activate EIF2AK1/HRI. Interacts (via TPR repeats) with EIF2AK1/HRI; activating the protein kinase activity of EIF2AK1/HRI, thereby promoting the integrated stress response (ISR). Post-translationally, unstable protein in absence of stress: imported in the mitochondrial matrix following processing by the mitochondrial-processing peptidase (MPP), where it is degraded by LONP1. Stabilized in response to iron deficiency: iron deficiency impairs mitochondrial import, promoting localization at the mitochondrial surface and stabilization. Cleaved by OMA1 in response to mitochondrial stress, generating the DAP3-binding cell death enhancer 1 short form (DELE1(S) or S-DELE1) that accumulates in the cytosol and activates the protein kinase activity of EIF2AK1/HRI. Protein cleavage by OMA1 can take place at different positions, and apparently does not require a specific sequence motif. In terms of processing, ubiquitinated and degraded by the SIFI complex once the mitochondrial stress has been resolved, thereby providing stress response silencing. Within the SIFI complex, UBR4 initiates ubiquitin chain that are further elongated or branched by KCMF1.

Its subcellular location is the mitochondrion. It localises to the mitochondrion outer membrane. The protein localises to the mitochondrion inner membrane. It is found in the cytoplasm. The protein resides in the cytosol. Functionally, protein kinase activator that acts as a key activator of the integrated stress response (ISR) following various stresses, such as iron deficiency, mitochondrial stress or mitochondrial DNA breaks. Detects impaired protein import and processing in mitochondria, activating the ISR. May also required for the induction of death receptor-mediated apoptosis through the regulation of caspase activation. Its function is as follows. Protein kinase activator that activates the ISR in response to iron deficiency: iron deficiency impairs mitochondrial import, promoting DELE1 localization at the mitochondrial surface, where it binds and activates EIF2AK1/HRI to trigger the ISR. Protein kinase activator generated by protein cleavage in response to mitochondrial stress, which accumulates in the cytosol and specifically binds to and activates the protein kinase activity of EIF2AK1/HRI. It thereby activates the integrated stress response (ISR): EIF2AK1/HRI activation promotes eIF-2-alpha (EIF2S1) phosphorylation, leading to a decrease in global protein synthesis and the induction of selected genes, including the transcription factor ATF4, the master transcriptional regulator of the ISR. Also acts as an activator of PRKN-independent mitophagy: activates the protein kinase activity of EIF2AK1/HRI in response to mitochondrial damage, promoting eIF-2-alpha (EIF2S1) phosphorylation, leading to mitochondrial localization of EIF2S1 followed by induction of mitophagy. The sequence is that of DAP3-binding cell death enhancer 1 from Rattus norvegicus (Rat).